The chain runs to 585 residues: Parathyroid hormone/parathyroid hormone-related peptide receptor (585 aa).

An N-terminal signal peptide occupies residues 1-26; that stretch reads MGAARIAPGLALLLCCPVLSSAYALV. The Extracellular portion of the chain corresponds to 27–184; that stretch reads DADDVMTKEE…REREVFDRLG (158 aa). Cystine bridges form between C48–C113, C104–C144, and C127–C166. The interval 66 to 100 is disordered; that stretch reads DKGWASAPTSGKPRKEKASGKLYPESGEDTGSRHQ. N-linked (GlcNAc...) asparagine glycans are attached at residues N147, N157, N162, and N172. A helical membrane pass occupies residues 185-208; sequence MIYTVGYSVSLASLTVAVLILAYF. Topologically, residues 209–215 are cytoplasmic; the sequence is RRLHCTR. The helical transmembrane segment at 216–235 threads the bilayer; sequence NYIHMHLFLSFMLRAVSIFV. At 236-277 the chain is on the extracellular side; that stretch reads KDAVLYSGATLDEAERLTEEELRAIAQAPLPPVAATSYVGCR. A helical membrane pass occupies residues 278–301; that stretch reads VAVTFFLYFLATNYYWILVEGLYL. Over 302–315 the chain is Cytoplasmic; that stretch reads HSLIFMAFFSEKKY. A helical transmembrane segment spans residues 316–337; that stretch reads LWGFTVFGWGLPAIFVAVWVSV. Residues 338–356 lie on the Extracellular side of the membrane; that stretch reads RATLANTGCWDLSSGNKKW. The chain crosses the membrane as a helical span at residues 357–377; sequence IIQVPILASIVLNFILFINIV. At 378 to 404 the chain is on the cytoplasmic side; sequence RVLATKLRETNAGRCDTRQQYRKLLKS. The chain crosses the membrane as a helical span at residues 405–423; the sequence is TLVLMPLFGVHYIVFMATP. Topologically, residues 424–435 are extracellular; it reads YTEVSGTLWQVQ. The helical transmembrane segment at 436 to 458 threads the bilayer; the sequence is MHYEMLFNSFQGFFVAIIYCFCN. At 459 to 585 the chain is on the cytoplasmic side; that stretch reads GEVQAEIKKS…LLQEEWETVM (127 aa). The Important for interaction with G proteins signature appears at 469–472; sequence WSRW. T543 is modified (phosphothreonine).

The protein belongs to the G-protein coupled receptor 2 family. In terms of assembly, homodimer in the absence of bound ligand. Peptide hormone binding leads to dissociation of the homodimer. Post-translationally, N-glycosylated.

It is found in the cell membrane. In terms of biological role, G-protein-coupled receptor for parathyroid hormone (PTH) and for parathyroid hormone-related peptide (PTHLH). Ligand binding causes a conformation change that triggers signaling via guanine nucleotide-binding proteins (G proteins) and modulates the activity of downstream effectors, such as adenylate cyclase (cAMP). PTH1R is coupled to G(s) G alpha proteins and mediates activation of adenylate cyclase activity. PTHLH dissociates from PTH1R more rapidly than PTH; as consequence, the cAMP response induced by PTHLH decays faster than the response induced by PTH. The sequence is that of Parathyroid hormone/parathyroid hormone-related peptide receptor (PTH1R) from Sus scrofa (Pig).